A 231-amino-acid polypeptide reads, in one-letter code: Lipoprotein-releasing system ATP-binding protein LolD (231 aa).

The ABC transporter domain maps to 6–231 (LKCQSVHKVY…VLAKVAPNSL (226 aa)). Residue 42–49 (GASGSGKS) participates in ATP binding.

It belongs to the ABC transporter superfamily. Lipoprotein translocase (TC 3.A.1.125) family. In terms of assembly, the complex is composed of two ATP-binding proteins (LolD) and two transmembrane proteins (LolC and LolE).

The protein resides in the cell inner membrane. Its function is as follows. Part of the ABC transporter complex LolCDE involved in the translocation of mature outer membrane-directed lipoproteins, from the inner membrane to the periplasmic chaperone, LolA. Responsible for the formation of the LolA-lipoprotein complex in an ATP-dependent manner. This Hahella chejuensis (strain KCTC 2396) protein is Lipoprotein-releasing system ATP-binding protein LolD.